A 1947-amino-acid polypeptide reads, in one-letter code: DNA-directed RNA polymerase subunit beta' (1947 aa).

Zn(2+)-binding residues include Cys119, Cys121, Cys141, and Cys144. Residues Asp1778, Asp1780, and Asp1782 each contribute to the Mg(2+) site.

The protein belongs to the RNA polymerase beta' chain family. RpoC1 subfamily. As to quaternary structure, in plastids the minimal PEP RNA polymerase catalytic core is composed of four subunits: alpha, beta, beta', and beta''. When a (nuclear-encoded) sigma factor is associated with the core the holoenzyme is formed, which can initiate transcription. Mg(2+) serves as cofactor. Requires Zn(2+) as cofactor.

The protein resides in the plastid. It localises to the chloroplast. The catalysed reaction is RNA(n) + a ribonucleoside 5'-triphosphate = RNA(n+1) + diphosphate. Its function is as follows. DNA-dependent RNA polymerase catalyzes the transcription of DNA into RNA using the four ribonucleoside triphosphates as substrates. This is DNA-directed RNA polymerase subunit beta' from Oedogonium cardiacum (Filamentous green alga).